The sequence spans 417 residues: UDP-N-acetylglucosamine 1-carboxyvinyltransferase (417 aa).

Position 22-23 (22-23 (KN)) interacts with phosphoenolpyruvate. Arginine 92 contacts UDP-N-acetyl-alpha-D-glucosamine. Residue cysteine 116 is the Proton donor of the active site. Position 116 is a 2-(S-cysteinyl)pyruvic acid O-phosphothioketal (cysteine 116). UDP-N-acetyl-alpha-D-glucosamine-binding positions include 161–164 (KVSV), aspartate 305, and isoleucine 327.

This sequence belongs to the EPSP synthase family. MurA subfamily.

The protein localises to the cytoplasm. The catalysed reaction is phosphoenolpyruvate + UDP-N-acetyl-alpha-D-glucosamine = UDP-N-acetyl-3-O-(1-carboxyvinyl)-alpha-D-glucosamine + phosphate. It functions in the pathway cell wall biogenesis; peptidoglycan biosynthesis. Its function is as follows. Cell wall formation. Adds enolpyruvyl to UDP-N-acetylglucosamine. This is UDP-N-acetylglucosamine 1-carboxyvinyltransferase from Pelagibacter ubique (strain HTCC1062).